The chain runs to 249 residues: Small ribosomal subunit protein uS2 (249 aa).

This sequence belongs to the universal ribosomal protein uS2 family.

The polypeptide is Small ribosomal subunit protein uS2 (Listeria monocytogenes serovar 1/2a (strain ATCC BAA-679 / EGD-e)).